A 211-amino-acid chain; its full sequence is Mitotic spindle assembly checkpoint protein MAD2B (211 aa).

The 191-residue stretch at 13–203 folds into the HORMA domain; the sequence is QVVADVLSEF…SDILKMQLYV (191 aa). The tract at residues 21–155 is mediates interaction with REV1 and REV3L and homodimerization; sequence EFLEVAVHLI…FTVLVHTREA (135 aa).

In terms of assembly, homooligomer. Heterodimer with REV3L. This dimer forms the minimal DNA polymerase zeta complex (Pol-zeta2), with REV3L bearing DNA polymerase catalytic activity, although its activity is very low in this context. Component of the tetrameric Pol-zeta complex (Pol-zeta4), which consists of REV3L, MAD2L2, POLD2 and POLD3; Pol-zeta4 is the fully active form of DNA polymerase zeta. Component of the shieldin complex, consisting of SHLD1, SHLD2, SHLD3 and MAD2L2/REV7. Within the complex, SHLD2 forms a scaffold which interacts with a SHLD3-MAD2L2 subcomplex via its N-terminus, and with SHLD1 via its C-terminus. Interacts with REV1. Interacts with ADAM9. Interacts with CHAMP1. Interacts with FZR1 (in complex with the anaphase promoting complex APC). May interact with CDC20. Interacts with RAN. Interacts with ELK1; the interaction is direct and recruits MAD2L2 to ELK1-specific promoters. May interact with the JNK kinases MAPK8 and/or MAPK9 to stimulate ELK1 phosphorylation and transcriptional activity upon DNA damage. Interacts with TCF7L2; prevents its binding to promoters and negatively modulates its transcriptional activity. Interacts with YY1AP1. Interacts with PRCC; the interaction is direct. Interacts with POGZ. Interacts with ASTE1.

The protein resides in the nucleus. The protein localises to the cytoplasm. It localises to the cytoskeleton. It is found in the spindle. In terms of biological role, adapter protein able to interact with different proteins and involved in different biological processes. Mediates the interaction between the error-prone DNA polymerase zeta catalytic subunit REV3L and the inserter polymerase REV1, thereby mediating the second polymerase switching in translesion DNA synthesis. Translesion DNA synthesis releases the replication blockade of replicative polymerases, stalled in presence of DNA lesions. Component of the shieldin complex, which plays an important role in repair of DNA double-stranded breaks (DSBs). During G1 and S phase of the cell cycle, the complex functions downstream of TP53BP1 to promote non-homologous end joining (NHEJ) and suppress DNA end resection. Mediates various NHEJ-dependent processes including immunoglobulin class-switch recombination, and fusion of unprotected telomeres. May also regulate another aspect of cellular response to DNA damage through regulation of the JNK-mediated phosphorylation and activation of the transcriptional activator ELK1. Inhibits the FZR1- and probably CDC20-mediated activation of the anaphase promoting complex APC thereby regulating progression through the cell cycle. Regulates TCF7L2-mediated gene transcription and may play a role in epithelial-mesenchymal transdifferentiation. The chain is Mitotic spindle assembly checkpoint protein MAD2B (Mad2l2) from Rattus norvegicus (Rat).